A 368-amino-acid chain; its full sequence is Cobalt-precorrin-5B C(1)-methyltransferase (368 aa).

The protein belongs to the CbiD family.

The catalysed reaction is Co-precorrin-5B + S-adenosyl-L-methionine = Co-precorrin-6A + S-adenosyl-L-homocysteine. It functions in the pathway cofactor biosynthesis; adenosylcobalamin biosynthesis; cob(II)yrinate a,c-diamide from sirohydrochlorin (anaerobic route): step 6/10. Its function is as follows. Catalyzes the methylation of C-1 in cobalt-precorrin-5B to form cobalt-precorrin-6A. The protein is Cobalt-precorrin-5B C(1)-methyltransferase of Synechococcus sp. (strain CC9605).